Reading from the N-terminus, the 238-residue chain is Histone deacetylase 7 (238 aa).

Disordered stretches follow at residues 1–26 (TPGSQPQPMDLRVGQRPTVEPPPEPA) and 47–72 (QQQRSAEPMRLSMDPPLPELQGGQQE). The segment at 58-158 (SMDPPLPELQ…LPTEPPEHFP (101 aa)) is interaction with MEF2A. Residues S118 and S164 each carry the phosphoserine modification. The disordered stretch occupies residues 145–238 (PVPSLPTEPP…NPALGSEADG (94 aa)). Over residues 176–190 (KSLERRKNPLLRKES) the composition is skewed to basic and acidic residues. Position 190 is a phosphoserine; by PKD/PRKD2 (S190). The span at 206 to 221 (SSPSSSSTPASGCSSP) shows a compositional bias: low complexity.

The protein belongs to the histone deacetylase family. HD type 2 subfamily. In terms of assembly, interacts with HDAC1, HDAC2, HDAC3, HDAC4, HDAC5, NCOR1, NCOR2, SIN3A, SIN3B, RBBP4, RBBP7, MTA1L1, SAP30 and MBD3. Interacts with KAT5 and EDNRA. Interacts with the 14-3-3 protein YWHAE, MEF2A, MEF2B and MEF2C. Interacts with ZMYND15. Interacts with KDM5B. Interacts with PML. Interacts with FOXP3. Interacts with RARA. Post-translationally, may be phosphorylated by CaMK1. Phosphorylated by the PKC kinases PKN1 and PKN2, impairing nuclear import. Phosphorylation at Ser-164 by MARK2, MARK3 and PRKD1 promotes interaction with 14-3-3 proteins and export from the nucleus. Phosphorylation at Ser-164 is a prerequisite for phosphorylation at Ser-190.

The protein localises to the nucleus. It is found in the cytoplasm. It catalyses the reaction N(6)-acetyl-L-lysyl-[histone] + H2O = L-lysyl-[histone] + acetate. It carries out the reaction N(6)-acetyl-L-lysyl-[protein] + H2O = L-lysyl-[protein] + acetate. Its function is as follows. Responsible for the deacetylation of lysine residues on the N-terminal part of the core histones (H2A, H2B, H3 and H4). Histone deacetylation gives a tag for epigenetic repression and plays an important role in transcriptional regulation, cell cycle progression and developmental events. Histone deacetylases act via the formation of large multiprotein complexes. Involved in muscle maturation by repressing transcription of myocyte enhancer factors such as MEF2A, MEF2B and MEF2C. During muscle differentiation, it shuttles into the cytoplasm, allowing the expression of myocyte enhancer factors. May be involved in Epstein-Barr virus (EBV) latency, possibly by repressing the viral BZLF1 gene. Positively regulates the transcriptional repressor activity of FOXP3. Serves as a corepressor of RARA, causing its deacetylation and inhibition of RARE DNA element binding. In association with RARA, plays a role in the repression of microRNA-10a and thereby in the inflammatory response. Also acetylates non-histone proteins, such as ALKBH5. The protein is Histone deacetylase 7 (Hdac7) of Rattus norvegicus (Rat).